A 221-amino-acid polypeptide reads, in one-letter code: ATP-dependent Clp protease proteolytic subunit 3 (221 aa).

Serine 118 (nucleophile) is an active-site residue. Histidine 143 is a catalytic residue.

The protein belongs to the peptidase S14 family. Fourteen ClpP subunits assemble into 2 heptameric rings which stack back to back to give a disk-like structure with a central cavity, resembling the structure of eukaryotic proteasomes.

The protein resides in the cytoplasm. The enzyme catalyses Hydrolysis of proteins to small peptides in the presence of ATP and magnesium. alpha-casein is the usual test substrate. In the absence of ATP, only oligopeptides shorter than five residues are hydrolyzed (such as succinyl-Leu-Tyr-|-NHMec, and Leu-Tyr-Leu-|-Tyr-Trp, in which cleavage of the -Tyr-|-Leu- and -Tyr-|-Trp bonds also occurs).. In terms of biological role, cleaves peptides in various proteins in a process that requires ATP hydrolysis. Has a chymotrypsin-like activity. Plays a major role in the degradation of misfolded proteins. In Nocardia farcinica (strain IFM 10152), this protein is ATP-dependent Clp protease proteolytic subunit 3.